Consider the following 441-residue polypeptide: Arginine biosynthesis bifunctional protein ArgJ, mitochondrial (441 aa).

Residues T177, K204, T215, E301, N436, and S441 each coordinate substrate. Catalysis depends on T215, which acts as the Nucleophile.

Belongs to the ArgJ family. In terms of assembly, heterodimer of an alpha and a beta chain. In terms of processing, the alpha and beta chains are autoproteolytically processed from a single precursor protein within the mitochondrion.

It localises to the mitochondrion matrix. The catalysed reaction is N(2)-acetyl-L-ornithine + L-glutamate = N-acetyl-L-glutamate + L-ornithine. It catalyses the reaction L-glutamate + acetyl-CoA = N-acetyl-L-glutamate + CoA + H(+). Its pathway is amino-acid biosynthesis; L-arginine biosynthesis; L-ornithine and N-acetyl-L-glutamate from L-glutamate and N(2)-acetyl-L-ornithine (cyclic): step 1/1. It functions in the pathway amino-acid biosynthesis; L-arginine biosynthesis; N(2)-acetyl-L-ornithine from L-glutamate: step 1/4. In terms of biological role, catalyzes two activities which are involved in the cyclic version of arginine biosynthesis: the synthesis of acetylglutamate from glutamate and acetyl-CoA, and of ornithine by transacetylation between acetylornithine and glutamate. This is Arginine biosynthesis bifunctional protein ArgJ, mitochondrial from Kluyveromyces lactis (strain ATCC 8585 / CBS 2359 / DSM 70799 / NBRC 1267 / NRRL Y-1140 / WM37) (Yeast).